A 164-amino-acid polypeptide reads, in one-letter code: Protein CURVATURE THYLAKOID 1A, chloroplastic (164 aa).

The N-terminal 62 residues, 1–62, are a transit peptide targeting the chloroplast; that stretch reads MAISVAASSS…LQKVELLKTR (62 aa). Position 63 is an N-acetylalanine (Ala-63). At 63-93 the chain is on the stromal side; it reads ASSEETSSIDTNELITDLKEKWDGLENKSTV. The chain crosses the membrane as a helical span at residues 94–114; it reads LIYGGGAIVAVWLSSIVVGAI. Residues 115-116 are Lumenal-facing; it reads NS. Residues 117-137 form a helical membrane-spanning segment; the sequence is VPLLPKVMELVGLGYTGWFVY. Residues 138-164 are Stromal-facing; that stretch reads RYLLFKSSRKELAEDIESLKKKIAGSE. Residues 140-164 adopt a coiled-coil conformation; sequence LLFKSSRKELAEDIESLKKKIAGSE.

The protein belongs to the CURT family. In terms of assembly, homo- and heterodimers and trimers.

Its subcellular location is the plastid. The protein localises to the chloroplast. The protein resides in the plastoglobule. It localises to the membrane. It is found in the chloroplast thylakoid membrane. In terms of biological role, determines thylakoid architecture by inducing membrane curvature. The sequence is that of Protein CURVATURE THYLAKOID 1A, chloroplastic (CURT1A) from Arabidopsis thaliana (Mouse-ear cress).